The chain runs to 99 residues: MISQERLLKVILAPHISEKSTVCAENDNTVVFRVAIDATKAEIKAAVAQLFEVEVDSVRTLVNKGKTKRTGARMGRRVDWKKAYVTLAAGAEIDFVGAE.

Belongs to the universal ribosomal protein uL23 family. In terms of assembly, part of the 50S ribosomal subunit. Contacts protein L29, and trigger factor when it is bound to the ribosome.

In terms of biological role, one of the early assembly proteins it binds 23S rRNA. One of the proteins that surrounds the polypeptide exit tunnel on the outside of the ribosome. Forms the main docking site for trigger factor binding to the ribosome. This chain is Large ribosomal subunit protein uL23, found in Shewanella woodyi (strain ATCC 51908 / MS32).